The chain runs to 518 residues: Bifunctional purine biosynthesis protein PurH (518 aa).

In terms of domain architecture, MGS-like spans 1 to 144; sequence MSKRALISVS…KNHAAVTVVC (144 aa).

It belongs to the PurH family.

It carries out the reaction (6R)-10-formyltetrahydrofolate + 5-amino-1-(5-phospho-beta-D-ribosyl)imidazole-4-carboxamide = 5-formamido-1-(5-phospho-D-ribosyl)imidazole-4-carboxamide + (6S)-5,6,7,8-tetrahydrofolate. The enzyme catalyses IMP + H2O = 5-formamido-1-(5-phospho-D-ribosyl)imidazole-4-carboxamide. Its pathway is purine metabolism; IMP biosynthesis via de novo pathway; 5-formamido-1-(5-phospho-D-ribosyl)imidazole-4-carboxamide from 5-amino-1-(5-phospho-D-ribosyl)imidazole-4-carboxamide (10-formyl THF route): step 1/1. It participates in purine metabolism; IMP biosynthesis via de novo pathway; IMP from 5-formamido-1-(5-phospho-D-ribosyl)imidazole-4-carboxamide: step 1/1. The chain is Bifunctional purine biosynthesis protein PurH from Lactococcus lactis subsp. cremoris (strain SK11).